The following is a 469-amino-acid chain: 3-isopropylmalate dehydratase large subunit (469 aa).

[4Fe-4S] cluster-binding residues include Cys347, Cys408, and Cys411.

It belongs to the aconitase/IPM isomerase family. LeuC type 1 subfamily. As to quaternary structure, heterodimer of LeuC and LeuD. [4Fe-4S] cluster serves as cofactor.

The catalysed reaction is (2R,3S)-3-isopropylmalate = (2S)-2-isopropylmalate. It participates in amino-acid biosynthesis; L-leucine biosynthesis; L-leucine from 3-methyl-2-oxobutanoate: step 2/4. Its function is as follows. Catalyzes the isomerization between 2-isopropylmalate and 3-isopropylmalate, via the formation of 2-isopropylmaleate. In Histophilus somni (strain 129Pt) (Haemophilus somnus), this protein is 3-isopropylmalate dehydratase large subunit.